The following is a 653-amino-acid chain: MLQARVQLKRGFVKATTTGVPGGEDVKKGPDTFKRSALLALGALGIVYGDIGTSPLYALRECFTGAHGIPPTPANVLGVLSLIFWSLIIVVSVKYLLLVMKADNRGEGGILAMMALVMQRQRAQPSHRSRPMLITLGIFGAALLYGDGIITPAITVLSAVEGLHVATAVFDPYVIPIALVILVALFLVQRHGTADIGAVFGPVMCIWFLTLAGLGVKELVHNPAVLGALSPWHAVELFRHNHLHGFLVLGGVFLVVTGCEALYADMGHFGRKPIQLAWFSMVLPALMLNYLGQGALLLRDASAARNPFFLLAPSWLLYPLVALATVAGVIASQALIAGVFSLTRQAMQLGYSPRMEVVHTSAEEMGQIYLPGLNWALLVGVVALVLGFRSSSALASAYGIAVSTAMVITTLMAYVVARELWGVRRWVAIPVVGLFLSVELAFFGANAVKVADGGWFPLLMAVVVFTLMTTWKRGRDILAAKLRASSIPLKVLLGSFGDHPPVRVPGTAIFMTGNAEGTPPALLHNLKHNKVLHEQVVLLTILSEELPHVPHSERVEVEPLEQGFVRVVARYGFMENPGIPDVLKRCREKGLQFQLMGTSFFLGRETLIPTKRPGMAVWREALFAWMSRNARSATAYFRIPPNRVVELGAQVEL.

12 helical membrane-spanning segments follow: residues 37 to 57, 79 to 99, 134 to 154, 168 to 188, 196 to 216, 243 to 263, 278 to 298, 320 to 340, 368 to 388, 397 to 417, 426 to 446, and 450 to 470; these read ALLA…SPLY, VLSL…LLLV, ITLG…TPAI, AVFD…LFLV, IGAV…GLGV, LHGF…EALY, WFSM…ALLL, LVAL…AGVF, IYLP…VLGF, AYGI…YVVA, WVAI…FGAN, and VADG…LMTT.

The protein belongs to the HAK/KUP transporter (TC 2.A.72) family.

It is found in the cell inner membrane. It carries out the reaction K(+)(in) + H(+)(in) = K(+)(out) + H(+)(out). Its function is as follows. Transport of potassium into the cell. Likely operates as a K(+):H(+) symporter. In Myxococcus xanthus (strain DK1622), this protein is Probable potassium transport system protein Kup.